A 296-amino-acid polypeptide reads, in one-letter code: Probable endonuclease 4 (296 aa).

Zn(2+) is bound by residues His-68, His-109, Glu-144, Asp-178, His-181, His-213, Asp-226, His-228, and Glu-258.

The protein belongs to the AP endonuclease 2 family. The cofactor is Zn(2+).

The enzyme catalyses Endonucleolytic cleavage to 5'-phosphooligonucleotide end-products.. In terms of biological role, endonuclease IV plays a role in DNA repair. It cleaves phosphodiester bonds at apurinic or apyrimidinic (AP) sites, generating a 3'-hydroxyl group and a 5'-terminal sugar phosphate. The chain is Probable endonuclease 4 from Staphylococcus epidermidis (strain ATCC 35984 / DSM 28319 / BCRC 17069 / CCUG 31568 / BM 3577 / RP62A).